Here is a 259-residue protein sequence, read N- to C-terminus: Global transcriptional regulator CodY (259 aa).

Residues 1 to 155 (MNLLEKTRKI…GATVVGMEIL (155 aa)) form a GAF domain region. Residues 203–222 (ASKIADRVGITRSVIVNALR) constitute a DNA-binding region (H-T-H motif). The residue at position 215 (Ser215) is a Phosphoserine.

Belongs to the CodY family.

Its subcellular location is the cytoplasm. Its function is as follows. DNA-binding global transcriptional regulator which is involved in the adaptive response to starvation and acts by directly or indirectly controlling the expression of numerous genes in response to nutrient availability. During rapid exponential growth, CodY is highly active and represses genes whose products allow adaptation to nutrient depletion. The chain is Global transcriptional regulator CodY from Geobacillus thermodenitrificans (strain NG80-2).